A 31-amino-acid polypeptide reads, in one-letter code: MEALVYVFLLVGTLMVIFFAIFFRDPPRIAK.

A helical transmembrane segment spans residues 3–23 (ALVYVFLLVGTLMVIFFAIFF).

This sequence belongs to the PsbT family. In terms of assembly, PSII is composed of 1 copy each of membrane proteins PsbA, PsbB, PsbC, PsbD, PsbE, PsbF, PsbH, PsbI, PsbJ, PsbK, PsbL, PsbM, PsbT, PsbX, PsbY, PsbZ, Psb30/Ycf12, at least 3 peripheral proteins of the oxygen-evolving complex and a large number of cofactors. It forms dimeric complexes.

It localises to the plastid. The protein resides in the chloroplast thylakoid membrane. Functionally, found at the monomer-monomer interface of the photosystem II (PS II) dimer, plays a role in assembly and dimerization of PSII. PSII is a light-driven water plastoquinone oxidoreductase, using light energy to abstract electrons from H(2)O, generating a proton gradient subsequently used for ATP formation. The chain is Photosystem II reaction center protein T from Gracilaria tenuistipitata var. liui (Red alga).